A 258-amino-acid polypeptide reads, in one-letter code: Large ribosomal subunit protein uL15c (258 aa).

Residues 1–65 (MSAASLIPVS…NVKSSGENVR (65 aa)) constitute a chloroplast transit peptide. The segment at 67-90 (RLDNLGPQPGSRKRPKRKGRGIAA) is disordered. Residues 77–86 (SRKRPKRKGR) show a composition bias toward basic residues.

This sequence belongs to the universal ribosomal protein uL15 family. As to quaternary structure, part of the 50S ribosomal subunit.

It localises to the plastid. The protein resides in the chloroplast. In Pisum sativum (Garden pea), this protein is Large ribosomal subunit protein uL15c (RPL15).